The following is a 206-amino-acid chain: Ras-related protein RABG3c (206 aa).

15–22 (GDSGVGKT) contacts GTP. The Effector region motif lies at 37-45 (YKATIGADF). Residues 63 to 67 (DTAGQ), 125 to 128 (NKTD), and 158 to 159 (SA) each bind GTP. Residues Cys204 and Cys206 are each lipidated (S-geranylgeranyl cysteine). The residue at position 206 (Cys206) is a Cysteine methyl ester.

The protein belongs to the small GTPase superfamily. Rab family.

It is found in the cell membrane. In terms of biological role, intracellular vesicle trafficking and protein transport. In Arabidopsis thaliana (Mouse-ear cress), this protein is Ras-related protein RABG3c (RABG3C).